Here is a 327-residue protein sequence, read N- to C-terminus: Diacylglycerol acyltransferase/mycolyltransferase Ag85B (327 aa).

The N-terminal stretch at 1-38 (MIDVSGKIRAWGRWLLVGAAATLPSLISLAGGAATASA) is a signal peptide. Position 80-81 (80-81 (LR)) interacts with substrate. A fibronectin-binding region spans residues 96–106 (FEWYYQSGLSV). A disulfide bridge links C125 with C130. Substrate is bound by residues S164 and D192. The Nucleophile role is filled by S164. The active site involves E268. Residues 270 to 273 (FVHG), K277, and 300 to 302 (HSW) each bind substrate. H300 is an active-site residue.

This sequence belongs to the mycobacterial A85 antigen family.

The protein localises to the secreted. It carries out the reaction 2 alpha,alpha'-trehalose 6-mycolate = alpha,alpha'-trehalose 6,6'-bismycolate + alpha,alpha-trehalose. The catalysed reaction is an acyl-CoA + a 1,2-diacyl-sn-glycerol = a triacyl-sn-glycerol + CoA. Its function is as follows. The antigen 85 proteins (FbpA, FbpB, FbpC) are responsible for the high affinity of mycobacteria for fibronectin, a large adhesive glycoprotein, which facilitates the attachment of M.tuberculosis to murine alveolar macrophages (AMs). They also help to maintain the integrity of the cell wall by catalyzing the transfer of mycolic acids to cell wall arabinogalactan and through the synthesis of alpha,alpha-trehalose dimycolate (TDM, cord factor). They catalyze the transfer of a mycoloyl residue from one molecule of alpha,alpha-trehalose monomycolate (TMM) to another TMM, leading to the formation of TDM. In Mycobacterium leprae (strain TN), this protein is Diacylglycerol acyltransferase/mycolyltransferase Ag85B (fbpB).